Here is a 559-residue protein sequence, read N- to C-terminus: Glycerol kinase (559 aa).

Threonine 20 is a binding site for ADP. Residues threonine 20, serine 21, and serine 22 each coordinate ATP. Residue threonine 20 participates in sn-glycerol 3-phosphate binding. Arginine 24 is an ADP binding site. Positions 94, 95, and 148 each coordinate sn-glycerol 3-phosphate. Glycerol is bound by residues arginine 94, glutamate 95, and tyrosine 148. Glycine 252 lines the beta-D-fructose 1,6-bisphosphate pocket. A sn-glycerol 3-phosphate-binding site is contributed by aspartate 265. Residues aspartate 265 and glutamine 266 each coordinate glycerol. The ADP site is built by threonine 287, glycine 332, glycine 433, and asparagine 437. Positions 287, 332, and 433 each coordinate ATP. Zn(2+) is bound at residue glutamate 501. Residues 532–552 (IFCSLPLGFFIVSSMVMLIGA) form a helical membrane-spanning segment.

It belongs to the FGGY kinase family.

It localises to the mitochondrion outer membrane. It is found in the nucleus. The protein resides in the cytoplasm. Its subcellular location is the cytosol. The enzyme catalyses glycerol + ATP = sn-glycerol 3-phosphate + ADP + H(+). It participates in polyol metabolism; glycerol degradation via glycerol kinase pathway; sn-glycerol 3-phosphate from glycerol: step 1/1. Its function is as follows. Kinase that plays a key role in glycerol metabolism, catalyzing its phosphorylation to produce sn-glycerol 3-phosphate. Sn-glycerol 3-phosphate is a crucial intermediate in various metabolic pathways, such as the synthesis of glycerolipids and triglycerides, glycogenesis, glycolysis and gluconeogenesis. In Rattus norvegicus (Rat), this protein is Glycerol kinase.